Consider the following 121-residue polypeptide: Phospholipase A2 homolog ECO_00035 (121 aa).

7 disulfides stabilise this stretch: cysteine 25/cysteine 114, cysteine 27/cysteine 43, cysteine 42/cysteine 94, cysteine 48/cysteine 121, cysteine 49/cysteine 87, cysteine 56/cysteine 80, and cysteine 74/cysteine 85. The tract at residues 104–116 (KKYKIYPNILCRG) is important for membrane-damaging activities in eukaryotes and bacteria; heparin-binding.

Belongs to the phospholipase A2 family. Group II subfamily. S49 sub-subfamily. As to quaternary structure, monomer. In terms of tissue distribution, expressed by the venom gland.

It is found in the secreted. In terms of biological role, snake venom phospholipase A2 homolog that lacks enzymatic activity. Shows high myotoxin activities and displays edema-inducing activities. Has cytotoxic activities against HUVEC cells (LC(50)=4.9 uL) and human lung adenocarcinoma A549 cells (LC(50)=3.5 uL). This is Phospholipase A2 homolog ECO_00035 from Echis coloratus (Carpet viper).